The chain runs to 182 residues: Adenine phosphoribosyltransferase (182 aa).

It belongs to the purine/pyrimidine phosphoribosyltransferase family. As to quaternary structure, homodimer.

The protein resides in the cytoplasm. It carries out the reaction AMP + diphosphate = 5-phospho-alpha-D-ribose 1-diphosphate + adenine. It functions in the pathway purine metabolism; AMP biosynthesis via salvage pathway; AMP from adenine: step 1/1. Functionally, catalyzes a salvage reaction resulting in the formation of AMP, that is energically less costly than de novo synthesis. The polypeptide is Adenine phosphoribosyltransferase (Stutzerimonas stutzeri (strain A1501) (Pseudomonas stutzeri)).